Consider the following 145-residue polypeptide: Probable D-aminoacyl-tRNA deacylase (145 aa).

This sequence belongs to the DTD family. Homodimer.

Its subcellular location is the cytoplasm. The catalysed reaction is glycyl-tRNA(Ala) + H2O = tRNA(Ala) + glycine + H(+). The enzyme catalyses a D-aminoacyl-tRNA + H2O = a tRNA + a D-alpha-amino acid + H(+). Its function is as follows. An aminoacyl-tRNA editing enzyme that deacylates mischarged D-aminoacyl-tRNAs. Also deacylates mischarged glycyl-tRNA(Ala), protecting cells against glycine mischarging by AlaRS. Acts via tRNA-based rather than protein-based catalysis; rejects L-amino acids rather than detecting D-amino acids in the active site. By recycling D-aminoacyl-tRNA to D-amino acids and free tRNA molecules, this enzyme counteracts the toxicity associated with the formation of D-aminoacyl-tRNA entities in vivo and helps enforce protein L-homochirality. The chain is Probable D-aminoacyl-tRNA deacylase from Shigella flexneri serotype 5b (strain 8401).